The primary structure comprises 79 residues: UPF0180 protein BCG9842_B3897 (79 aa).

This sequence belongs to the UPF0180 family.

The sequence is that of UPF0180 protein BCG9842_B3897 from Bacillus cereus (strain G9842).